The chain runs to 100 residues: Integration host factor subunit alpha 2 (100 aa).

Belongs to the bacterial histone-like protein family. Heterodimer of an alpha and a beta chain.

In terms of biological role, this protein is one of the two subunits of integration host factor, a specific DNA-binding protein that functions in genetic recombination as well as in transcriptional and translational control. This is Integration host factor subunit alpha 2 from Dechloromonas aromatica (strain RCB).